A 365-amino-acid polypeptide reads, in one-letter code: Phosphoserine aminotransferase (365 aa).

Arg-46 serves as a coordination point for L-glutamate. Pyridoxal 5'-phosphate-binding positions include 80–81 (AT), Trp-106, Thr-157, Asp-177, and Gln-200. N6-(pyridoxal phosphate)lysine is present on Lys-201. 242-243 (NT) lines the pyridoxal 5'-phosphate pocket.

This sequence belongs to the class-V pyridoxal-phosphate-dependent aminotransferase family. SerC subfamily. In terms of assembly, homodimer. Pyridoxal 5'-phosphate is required as a cofactor.

The protein resides in the cytoplasm. It carries out the reaction O-phospho-L-serine + 2-oxoglutarate = 3-phosphooxypyruvate + L-glutamate. The catalysed reaction is 4-(phosphooxy)-L-threonine + 2-oxoglutarate = (R)-3-hydroxy-2-oxo-4-phosphooxybutanoate + L-glutamate. Its pathway is amino-acid biosynthesis; L-serine biosynthesis; L-serine from 3-phospho-D-glycerate: step 2/3. It functions in the pathway cofactor biosynthesis; pyridoxine 5'-phosphate biosynthesis; pyridoxine 5'-phosphate from D-erythrose 4-phosphate: step 3/5. In terms of biological role, catalyzes the reversible conversion of 3-phosphohydroxypyruvate to phosphoserine and of 3-hydroxy-2-oxo-4-phosphonooxybutanoate to phosphohydroxythreonine. The chain is Phosphoserine aminotransferase from Leptospira biflexa serovar Patoc (strain Patoc 1 / Ames).